The following is a 582-amino-acid chain: Vesicular glutamate transporter 2 (582 aa).

Residues 1–71 (MESVKQRILT…CTCFGLPRRY (71 aa)) are Cytoplasmic-facing. Residues 72-92 (IIAIMSGLGFCISFGIRCNLG) form a helical membrane-spanning segment. The Vesicular portion of the chain corresponds to 93-125 (VAIVDMVNNSTIHRGGKVIKEKAKFNWDPETVG). 2 N-linked (GlcNAc...) asparagine glycosylation sites follow: N100 and N101. The chain crosses the membrane as a helical span at residues 126 to 146 (MIHGSFFWGYIITQIPGGYIA). Residues 147-148 (SR) lie on the Cytoplasmic side of the membrane. A helical transmembrane segment spans residues 149–169 (LAANRVFGAAILLTSTLNMLI). At 170 to 177 (PSAARVHY) the chain is on the vesicular side. A helical transmembrane segment spans residues 178–198 (GCVIFVRILQGLVEGVTYPAC). Residues 199–216 (HGIWSKWAPPLERSRLAT) lie on the Cytoplasmic side of the membrane. A helical transmembrane segment spans residues 217–237 (TSFCGSYAGAVIAMPLAGILV). Over 238 to 244 (QYTGWSS) the chain is Vesicular. A helical membrane pass occupies residues 245–265 (VFYVYGSFGMIWYMFWLLVSY). The Cytoplasmic portion of the chain corresponds to 266-310 (ESPAKHPTITDEERRYIEESIGESANLLGAMEKFKTPWRKFFTSM). Residues 311–331 (PVYAIIVANFCRSWTFYLLLI) traverse the membrane as a helical segment. Residues 332-349 (SQPAYFEEVFGFEISKVG) are Vesicular-facing. The helical transmembrane segment at 350-370 (MLSAVPHLVMTIIVPIGGQIA) threads the bilayer. Residues 371 to 386 (DFLRSKQILSTTTVRK) lie on the Cytoplasmic side of the membrane. Residues 387–407 (IMNCGGFGMEATLLLVVGYSH) form a helical membrane-spanning segment. The Vesicular portion of the chain corresponds to 408-409 (TR). Residues 410–430 (GVAISFLVLAVGFSGFAISGF) form a helical membrane-spanning segment. The Cytoplasmic segment spans residues 431–443 (NVNHLDIAPRYAS). The chain crosses the membrane as a helical span at residues 444–464 (ILMGISNGVGTLSGMVCPIIV). At 465-477 (GAMTKNKSREEWQ) the chain is on the vesicular side. N470 carries N-linked (GlcNAc...) asparagine glycosylation. The helical transmembrane segment at 478–498 (YVFLIAALVHYGGVIFYAIFA) threads the bilayer. Residues 499–582 (SGEKQPWADP…YNYKDRDDYS (84 aa)) are Cytoplasmic-facing.

It belongs to the major facilitator superfamily. Sodium/anion cotransporter family. VGLUT subfamily.

It localises to the cytoplasmic vesicle. The protein localises to the secretory vesicle. The protein resides in the synaptic vesicle membrane. It is found in the synapse. Its subcellular location is the synaptosome. It localises to the cell membrane. The catalysed reaction is L-glutamate(out) = L-glutamate(in). It carries out the reaction 3 Na(+)(out) + phosphate(out) = 3 Na(+)(in) + phosphate(in). It catalyses the reaction phosphate(in) = phosphate(out). The enzyme catalyses K(+)(in) + H(+)(out) = K(+)(out) + H(+)(in). The catalysed reaction is chloride(in) = chloride(out). Its activity is regulated as follows. Chloride channel activity is allosterically activated by lumenal H(+) and Cl(-) leading to synaptic vesicles acidification. The L-glutamate transport activity is allosterically activated by lumenal H(+) and Cl(-). The allosteric requirement for H(+) efficiently prevents non-vesicular efflux across the plasma membrane. The L-glutamate uniporter activity exhibits a biphasic dependence on chloride concentration. Functionally, multifunctional transporter that transports L-glutamate as well as multiple ions such as chloride, proton, potassium, sodium and phosphate. At the synaptic vesicle membrane, mainly functions as a uniporter which transports preferentially L-glutamate but also, phosphate from the cytoplasm into synaptic vesicles at presynaptic nerve terminals of excitatory neural cells. The L-glutamate or phosphate uniporter activity is electrogenic and is driven by the proton electrochemical gradient, mainly by the electrical gradient established by the vacuolar H(+)-ATPase across the synaptic vesicle membrane. In addition, functions as a chloride channel that allows a chloride permeation through the synaptic vesicle membrane therefore affects the proton electrochemical gradient and promotes synaptic vesicles acidification. Moreover, functions as a vesicular K(+)/H(+) antiport allowing to maintain the electrical gradient and to decrease chemical gradient and therefore sustain vesicular L-glutamate uptake. The vesicular H(+)/H(+) antiport activity is electroneutral. At the plasma membrane, following exocytosis, functions as a symporter of Na(+) and phosphate from the extracellular space to the cytoplasm allowing synaptic phosphate homeostasis regulation. The symporter activity is driven by an inside negative membrane potential and is electrogenic. Also involved in the regulation of retinal hyaloid vessel regression during postnatal development. May also play a role in the endocrine L-glutamatergic system of other tissues such as pineal gland and pancreas. This chain is Vesicular glutamate transporter 2, found in Bos taurus (Bovine).